The sequence spans 215 residues: Dual specificity phosphatase 29 (215 aa).

The 149-residue stretch at 53–201 folds into the Tyrosine-protein phosphatase domain; the sequence is HVNEVWPRLH…LRELDKQLVK (149 aa). 145 to 152 lines the substrate pocket; that stretch reads HCAMGRSR. The active-site Phosphocysteine intermediate is C146.

The protein belongs to the protein-tyrosine phosphatase family. Non-receptor class dual specificity subfamily. Homodimer. Interacts with PRKAA2.

The protein localises to the cytoplasm. It is found in the nucleus. The enzyme catalyses O-phospho-L-tyrosyl-[protein] + H2O = L-tyrosyl-[protein] + phosphate. The catalysed reaction is O-phospho-L-seryl-[protein] + H2O = L-seryl-[protein] + phosphate. It catalyses the reaction O-phospho-L-threonyl-[protein] + H2O = L-threonyl-[protein] + phosphate. In terms of biological role, dual specificity phosphatase able to dephosphorylate phosphotyrosine, phosphoserine and phosphothreonine residues within the same substrate, with a preference for phosphotyrosine as a substrate. Involved in the modulation of intracellular signaling cascades. In skeletal muscle regulates systemic glucose homeostasis by activating, AMPK, an energy sensor protein kinase. Affects MAP kinase signaling though modulation of the MAPK1/2 cascade in skeletal muscle promoting muscle cell differentiation, development and atrophy. The protein is Dual specificity phosphatase 29 (Dusp29) of Rattus norvegicus (Rat).